Consider the following 317-residue polypeptide: Serpentine receptor class delta-44 (317 aa).

6 helical membrane-spanning segments follow: residues 5-25 (ILSV…IILI), 90-110 (MFHI…LTTF), 130-150 (ILFI…LVII), 185-205 (RVNG…CLLL), 235-255 (IFGH…SLIT), and 264-284 (FFIF…TMYF).

It belongs to the nematode receptor-like protein srd family.

The protein resides in the membrane. This is Serpentine receptor class delta-44 (srd-44) from Caenorhabditis elegans.